The following is a 318-amino-acid chain: Methionyl-tRNA formyltransferase (318 aa).

113–116 provides a ligand contact to (6S)-5,6,7,8-tetrahydrofolate; that stretch reads SLLP.

The protein belongs to the Fmt family.

It catalyses the reaction L-methionyl-tRNA(fMet) + (6R)-10-formyltetrahydrofolate = N-formyl-L-methionyl-tRNA(fMet) + (6S)-5,6,7,8-tetrahydrofolate + H(+). Its function is as follows. Attaches a formyl group to the free amino group of methionyl-tRNA(fMet). The formyl group appears to play a dual role in the initiator identity of N-formylmethionyl-tRNA by promoting its recognition by IF2 and preventing the misappropriation of this tRNA by the elongation apparatus. In Hahella chejuensis (strain KCTC 2396), this protein is Methionyl-tRNA formyltransferase.